Consider the following 1323-residue polypeptide: DNA-directed RNA polymerase subunit beta' (1323 aa).

The Zn(2+) site is built by Cys-60, Cys-62, Cys-75, and Cys-78. Mg(2+) is bound by residues Asp-535, Asp-537, and Asp-539. Cys-894, Cys-977, Cys-984, and Cys-987 together coordinate Zn(2+).

This sequence belongs to the RNA polymerase beta' chain family. The RNAP catalytic core consists of 2 alpha, 1 beta, 1 beta' and 1 omega subunit. When a sigma factor is associated with the core the holoenzyme is formed, which can initiate transcription. Mg(2+) is required as a cofactor. Requires Zn(2+) as cofactor.

The catalysed reaction is RNA(n) + a ribonucleoside 5'-triphosphate = RNA(n+1) + diphosphate. Functionally, DNA-dependent RNA polymerase catalyzes the transcription of DNA into RNA using the four ribonucleoside triphosphates as substrates. In Corynebacterium urealyticum (strain ATCC 43042 / DSM 7109), this protein is DNA-directed RNA polymerase subunit beta'.